The following is a 70-amino-acid chain: Small ribosomal subunit protein eS17 (70 aa).

The protein belongs to the eukaryotic ribosomal protein eS17 family.

The sequence is that of Small ribosomal subunit protein eS17 from Methanopyrus kandleri (strain AV19 / DSM 6324 / JCM 9639 / NBRC 100938).